Consider the following 163-residue polypeptide: Phosphopantetheine adenylyltransferase (163 aa).

Serine 11 provides a ligand contact to substrate. Residues 11–12 and histidine 19 contribute to the ATP site; that span reads SF. Residues lysine 43, leucine 75, and arginine 89 each contribute to the substrate site. ATP is bound by residues 90–92, glutamate 100, and 125–131; these read GLR and YSFLSSS.

This sequence belongs to the bacterial CoaD family. As to quaternary structure, homohexamer. Mg(2+) serves as cofactor.

Its subcellular location is the cytoplasm. It catalyses the reaction (R)-4'-phosphopantetheine + ATP + H(+) = 3'-dephospho-CoA + diphosphate. The protein operates within cofactor biosynthesis; coenzyme A biosynthesis; CoA from (R)-pantothenate: step 4/5. Reversibly transfers an adenylyl group from ATP to 4'-phosphopantetheine, yielding dephospho-CoA (dPCoA) and pyrophosphate. The polypeptide is Phosphopantetheine adenylyltransferase (Lysinibacillus sphaericus (strain C3-41)).